A 412-amino-acid chain; its full sequence is FAD-dependent monooxygenase nscC (412 aa).

Residues 1-21 (MGKPQETILIIGAGIAGLTAS) form the signal peptide. FAD is bound by residues glutamate 35 and alanine 46. Residues asparagine 68 and asparagine 92 are each glycosylated (N-linked (GlcNAc...) asparagine). Position 119 (arginine 119) interacts with FAD. N-linked (GlcNAc...) asparagine glycosylation is found at asparagine 170, asparagine 231, and asparagine 251. Aspartate 326 and glycine 339 together coordinate FAD.

This sequence belongs to the paxM FAD-dependent monooxygenase family. FAD is required as a cofactor.

The protein operates within secondary metabolite biosynthesis. Its function is as follows. FAD-dependent monooxygenase; part of the gene cluster that mediates the biosynthesis of neosartoricin B, a prenylated anthracenone that probably exhibits T-cell antiproliferative activity, suggestive of a physiological role as an immunosuppressive agent. The non-reducing polyketide synthase nscA probably synthesizes and cyclizes the decaketide backbone. The hydrolase nscB then mediates the product release through hydrolysis followed by spontaneous decarboxylation. The prenyltransferase nscD catalyzes the addition of the dimethylallyl group to the aromatic C5. The FAD-dependent monooxygenase nscC is then responsible for the stereospecific hydroxylation at C2. Neosartoricin B can be converted into two additional compounds neosartoricins C and D. Neosartoricin C is a spirocyclic compound that is cyclized through the attack of C3 hydroxyl on C14, followed by dehydration. On the other hand, neosartoricin D is a further cyclized compound in which attack of C2 on C14 in neosartoricin C results in the formation of the acetal-containing dioxabicyclo-octanone ring. Both of these compounds are novel and possibly represent related metabolites of the gene cluster. The chain is FAD-dependent monooxygenase nscC from Trichophyton rubrum (strain ATCC MYA-4607 / CBS 118892) (Athlete's foot fungus).